The sequence spans 108 residues: MTSKTVTRADLASVVCRKVGLSHTESAALVELVLNEICNSLVRGEAVKLSSFATFQVRKKNERVGRNPKTGVEAPILPRRVVTFKAANVLKQRILDSHRARQKIISHE.

It belongs to the bacterial histone-like protein family. In terms of assembly, heterodimer of an alpha and a beta chain.

This protein is one of the two subunits of integration host factor, a specific DNA-binding protein that functions in genetic recombination as well as in transcriptional and translational control. This Bartonella henselae (strain ATCC 49882 / DSM 28221 / CCUG 30454 / Houston 1) (Rochalimaea henselae) protein is Integration host factor subunit alpha.